The sequence spans 78 residues: UPF0612 protein new22 (78 aa).

It belongs to the UPF0612 family.

This Schizosaccharomyces pombe (strain 972 / ATCC 24843) (Fission yeast) protein is UPF0612 protein new22 (new22).